Reading from the N-terminus, the 346-residue chain is Ketol-acid reductoisomerase (NADP(+)) (346 aa).

Residues 1–189 form the KARI N-terminal Rossmann domain; the sequence is MQVYYDRDAD…GGGRSGIIET (189 aa). NADP(+)-binding positions include 24 to 27, R48, S51, T53, and 83 to 86; these read YGSQ and DEHQ. The active site involves H108. G134 contributes to the NADP(+) binding site. One can recognise a KARI C-terminal knotted domain in the interval 190 to 335; the sequence is TFKEECETDL…EKLRAMMPWI (146 aa). Positions 198, 202, 234, and 238 each coordinate Mg(2+). S259 lines the substrate pocket.

The protein belongs to the ketol-acid reductoisomerase family. Requires Mg(2+) as cofactor.

The enzyme catalyses (2R)-2,3-dihydroxy-3-methylbutanoate + NADP(+) = (2S)-2-acetolactate + NADPH + H(+). The catalysed reaction is (2R,3R)-2,3-dihydroxy-3-methylpentanoate + NADP(+) = (S)-2-ethyl-2-hydroxy-3-oxobutanoate + NADPH + H(+). It functions in the pathway amino-acid biosynthesis; L-isoleucine biosynthesis; L-isoleucine from 2-oxobutanoate: step 2/4. It participates in amino-acid biosynthesis; L-valine biosynthesis; L-valine from pyruvate: step 2/4. Its function is as follows. Involved in the biosynthesis of branched-chain amino acids (BCAA). Catalyzes an alkyl-migration followed by a ketol-acid reduction of (S)-2-acetolactate (S2AL) to yield (R)-2,3-dihydroxy-isovalerate. In the isomerase reaction, S2AL is rearranged via a Mg-dependent methyl migration to produce 3-hydroxy-3-methyl-2-ketobutyrate (HMKB). In the reductase reaction, this 2-ketoacid undergoes a metal-dependent reduction by NADPH to yield (R)-2,3-dihydroxy-isovalerate. This is Ketol-acid reductoisomerase (NADP(+)) from Sphingopyxis alaskensis (strain DSM 13593 / LMG 18877 / RB2256) (Sphingomonas alaskensis).